A 380-amino-acid chain; its full sequence is Mitogen-activated protein kinase mpkC (380 aa).

One can recognise a Protein kinase domain in the interval 20–300 (YVNLQPIGMG…AQDALRHPYL (281 aa)). ATP-binding positions include 26–34 (IGMGSFGLV) and K49. The active-site Proton acceptor is the D141. T171 carries the phosphothreonine modification. The TXY signature appears at 171–173 (TGY). Y173 carries the post-translational modification Phosphotyrosine.

This sequence belongs to the protein kinase superfamily. Ser/Thr protein kinase family. MAP kinase subfamily. HOG1 sub-subfamily. It depends on Mg(2+) as a cofactor. Post-translationally, dually phosphorylated on Thr-171 and Tyr-173, which activates the enzyme.

It catalyses the reaction L-seryl-[protein] + ATP = O-phospho-L-seryl-[protein] + ADP + H(+). It carries out the reaction L-threonyl-[protein] + ATP = O-phospho-L-threonyl-[protein] + ADP + H(+). Its activity is regulated as follows. Activated by tyrosine and threonine phosphorylation. In terms of biological role, mitogen-activated protein kinase required for growth on media where sorbitol or mannitol is the sole carbon source. The sequence is that of Mitogen-activated protein kinase mpkC (mpkC) from Aspergillus clavatus (strain ATCC 1007 / CBS 513.65 / DSM 816 / NCTC 3887 / NRRL 1 / QM 1276 / 107).